Consider the following 61-residue polypeptide: Bacteriocin mesentericin Y105 (61 aa).

An N-terminal signal peptide occupies residues 1–24 (MTNMKSVEAYQQLDNQNLKKVVGG). C33 and C38 are disulfide-bonded.

It belongs to the bacteriocin class IIA/YGNGV family.

It localises to the secreted. Functionally, bacteriocin active against Listeria monocytogenes. The sequence is that of Bacteriocin mesentericin Y105 (mesY) from Leuconostoc mesenteroides.